A 354-amino-acid chain; its full sequence is Uroporphyrinogen decarboxylase (354 aa).

Residues 27–31, Asp77, Tyr154, Ser209, and His327 each bind substrate; that span reads RQAGR.

This sequence belongs to the uroporphyrinogen decarboxylase family. Homodimer.

The protein localises to the cytoplasm. The catalysed reaction is uroporphyrinogen III + 4 H(+) = coproporphyrinogen III + 4 CO2. The protein operates within porphyrin-containing compound metabolism; protoporphyrin-IX biosynthesis; coproporphyrinogen-III from 5-aminolevulinate: step 4/4. Its function is as follows. Catalyzes the decarboxylation of four acetate groups of uroporphyrinogen-III to yield coproporphyrinogen-III. The protein is Uroporphyrinogen decarboxylase of Shewanella pealeana (strain ATCC 700345 / ANG-SQ1).